Here is a 270-residue protein sequence, read N- to C-terminus: Chromo domain-containing protein cec-4 (270 aa).

Disordered regions lie at residues methionine 1–lysine 24 and lysine 143–valine 229. In terms of domain architecture, Chromo spans tyrosine 87–threonine 147. Basic residues-rich tracts occupy residues threonine 151–alanine 167 and threonine 187–arginine 197. The span at leucine 205–valine 229 shows a compositional bias: basic and acidic residues.

As to quaternary structure, interacts with mono-, di- and tri-methylated 'Lys-9' residues on histone H3. Weakly interacts with methylated 'Lys-37' residues on histone H3.

It localises to the nucleus inner membrane. It is found in the membrane. In terms of biological role, chromatin anchor protein which binds to methylated lysine residues on histone H3, thereby recruiting heterochromatin to the nuclear periphery, especially in embryonic cells, with a lesser role in differentiated cells. May be required for the correct positioning of chromatin and nucleoli in embryos. The chain is Chromo domain-containing protein cec-4 from Caenorhabditis elegans.